The sequence spans 235 residues: Class A basic helix-loop-helix protein 9 (235 aa).

Disordered stretches follow at residues 1–69 and 132–235; these read MLRG…RRMA and GHLE…HPRS. Positions 55 to 67 are enriched in basic residues; it reads RRRARPVRSKARR. Positions 65–117 constitute a bHLH domain; the sequence is ARRMAANVRERKRILDYNEAFNALRRALRHDLGGKRLSKIATLRRAIHRIAAL.

As to quaternary structure, heterodimer. Efficient DNA binding requires dimerization with another bHLH protein. Interacts with TCF3, TCF4, and TCF12.

Its subcellular location is the nucleus. The protein localises to the cytoplasm. Transcription factor, which play a role in limb development. Is an essential player in the regulatory network governing transcription of genes implicated in limb morphogenesis. The polypeptide is Class A basic helix-loop-helix protein 9 (BHLHA9) (Homo sapiens (Human)).